A 471-amino-acid chain; its full sequence is Putative multidrug resistance protein MdtD (471 aa).

Residues 1–11 (MTDLPDSTRWQ) lie on the Periplasmic side of the membrane. A helical transmembrane segment spans residues 12–32 (LWIVAFGFFMQSLDTTIVNTA). Over 33–48 (LPSMAQSLGESPLHMH) the chain is Cytoplasmic. Residues 49 to 69 (MVIVSYVLTVAVMLPASGWLA) traverse the membrane as a helical segment. Topologically, residues 70–76 (DKVGVRN) are periplasmic. A helical transmembrane segment spans residues 77-97 (IFFTAIVLFTLGSLFCALSGT). At 98–101 (LNEL) the chain is on the cytoplasmic side. The chain crosses the membrane as a helical span at residues 102–124 (LLARALQGVGGAMMVPVGRLTVM). Residues 125–137 (KIVPREQYMAAMT) are Periplasmic-facing. The helical transmembrane segment at 138–158 (FVTLPGQVGPLLGPALGGLLV) threads the bilayer. The Cytoplasmic segment spans residues 159–164 (EYASWH). A helical transmembrane segment spans residues 165 to 185 (WIFLINIPVGIIGAIATLMLM). Residues 186–196 (PNYTMQTRRFD) lie on the Periplasmic side of the membrane. Residues 197 to 217 (LSGFLLLAVGMAVLTLALDGS) traverse the membrane as a helical segment. Over 218–224 (KGTGLSP) the chain is Cytoplasmic. A helical membrane pass occupies residues 225-245 (LTIDGLVAVGVVALVLYLLHA). At 246–262 (RNNNRALFSLKLFRTRT) the chain is on the periplasmic side. The helical transmembrane segment at 263-283 (FSLGLAGSFAGRIGSGMLPFM) threads the bilayer. The Cytoplasmic segment spans residues 284–285 (TP). A helical transmembrane segment spans residues 286 to 306 (VFLQIGLGFSPFHAGLMMIPM). At 307-341 (VLGSMGMKRIVVQVVNRFGYRRVLVATTLGLSLVT) the chain is on the periplasmic side. Residues 342–362 (LLFMTTALLGWYYVLPFVLFL) traverse the membrane as a helical segment. The Cytoplasmic portion of the chain corresponds to 363–395 (QGMVNSTRFSSMNTLTLKDLPDNLASSGNSLLS). Residues 396-416 (MIMQLSMSIGVTIAGLLLGLF) form a helical membrane-spanning segment. Residues 417–430 (GSQHVSIDSGTTQT) are Periplasmic-facing. Residues 431–451 (VFMYTWLSMALIIALPAFIFA) form a helical membrane-spanning segment. Topologically, residues 452–471 (RVPNDTHQNVAISRRKRSAQ) are cytoplasmic.

It belongs to the major facilitator superfamily. TCR/Tet family.

It localises to the cell inner membrane. The chain is Putative multidrug resistance protein MdtD from Escherichia coli (strain SE11).